A 391-amino-acid polypeptide reads, in one-letter code: S-adenosylmethionine synthase (391 aa).

Residue histidine 14 coordinates ATP. Aspartate 16 is a binding site for Mg(2+). Glutamate 42 is a K(+) binding site. Residues glutamate 55 and glutamine 98 each coordinate L-methionine. The flexible loop stretch occupies residues 98–108 (QSVDIAMGVDE). Residues 172–174 (DGK), 238–239 (RF), aspartate 247, 253–254 (RK), alanine 270, and lysine 274 each bind ATP. Aspartate 247 lines the L-methionine pocket. Lysine 278 is a binding site for L-methionine.

The protein belongs to the AdoMet synthase family. As to quaternary structure, homotetramer; dimer of dimers. Mg(2+) serves as cofactor. The cofactor is K(+).

It is found in the cytoplasm. It catalyses the reaction L-methionine + ATP + H2O = S-adenosyl-L-methionine + phosphate + diphosphate. It participates in amino-acid biosynthesis; S-adenosyl-L-methionine biosynthesis; S-adenosyl-L-methionine from L-methionine: step 1/1. In terms of biological role, catalyzes the formation of S-adenosylmethionine (AdoMet) from methionine and ATP. The overall synthetic reaction is composed of two sequential steps, AdoMet formation and the subsequent tripolyphosphate hydrolysis which occurs prior to release of AdoMet from the enzyme. The polypeptide is S-adenosylmethionine synthase (Clostridium botulinum (strain Kyoto / Type A2)).